Reading from the N-terminus, the 210-residue chain is Isochorismatase domain-containing protein 2 (210 aa).

At S7 the chain carries Phosphoserine.

It belongs to the isochorismatase family. Interacts with CDKN2A.

It is found in the cytoplasm. It localises to the nucleus. The polypeptide is Isochorismatase domain-containing protein 2 (Isoc2) (Rattus norvegicus (Rat)).